Reading from the N-terminus, the 253-residue chain is uncharacterized protein (253 aa).

This is an uncharacterized protein from Bacillus subtilis (strain 168).